The primary structure comprises 655 residues: Probable inactive receptor kinase At1g48480 (655 aa).

Residues 1–32 (MRVFFFPNSSMAILSVFLSLLLLSLPLPSTQD) form the signal peptide. LRR repeat units follow at residues 71-95 (SNRVTALRLPGVALSGDIPEGIFGN), 98-120 (QLRTLSLRLNALSGSLPKDLSTS), 122-144 (NLRHLYLQGNRFSGEIPEVLFSL), 146-169 (HLVRLNLASNSFTGEISSGFTNLT), 170-192 (KLKTLFLENNQLSGSIPDLDLPL), and 194-215 (QFNVSNNSLNGSIPKNLQRFES). The tract at residues 234-260 (EETVPSQPTSGGNRTPPSVEGSEEKKK) is disordered. Positions 237-249 (VPSQPTSGGNRTP) are enriched in polar residues. A helical transmembrane segment spans residues 269–289 (IAGIVIGCVVGFALIVLILMV). Residues 371 to 646 (RASAEVLGKG…RKMENLRPYS (276 aa)) enclose the Protein kinase domain. Serine 373 carries the post-translational modification Phosphoserine. Residue 377–385 (LGKGTFGTA) participates in ATP binding. A Phosphothreonine modification is found at threonine 394. Lysine 399 is a binding site for ATP. Serine 450 bears the Phosphoserine mark. Threonine 526 carries the phosphothreonine modification. A Phosphoserine modification is found at serine 546. At threonine 622 the chain carries Phosphothreonine.

The protein belongs to the protein kinase superfamily. In terms of tissue distribution, highly expressed in seedlings and leaves. Lower expression in roots, stems, flowers and siliques. Detected in the vascular tissues of roots, in the trichomes of young rosettes leaves and hydathodes, in the floral abscission zones, in filament apex and stomata cells of anthers, in inflorescence stems and in sepals.

The protein resides in the cell membrane. The chain is Probable inactive receptor kinase At1g48480 (RKL1) from Arabidopsis thaliana (Mouse-ear cress).